Here is a 300-residue protein sequence, read N- to C-terminus: ESX-5 secretion-associated protein EspG5 (300 aa).

This sequence belongs to the EspG family. Interacts specifically with ESX-5-dependent PE/PPE proteins. Binds PPE33 and PPE18. Does not interact with EsxN. Monomer in solution.

The protein resides in the cytoplasm. In terms of biological role, specific chaperone for cognate PE/PPE proteins. Plays an important role in preventing aggregation of PE/PPE dimers. Required for LipY and PE31/PPE18 secretion. This Mycobacterium marinum (strain ATCC BAA-535 / M) protein is ESX-5 secretion-associated protein EspG5.